A 189-amino-acid chain; its full sequence is Peptidyl-tRNA hydrolase (189 aa).

Y15 lines the tRNA pocket. Catalysis depends on H20, which acts as the Proton acceptor. TRNA-binding residues include F66, N68, and N114.

It belongs to the PTH family. As to quaternary structure, monomer.

The protein localises to the cytoplasm. The catalysed reaction is an N-acyl-L-alpha-aminoacyl-tRNA + H2O = an N-acyl-L-amino acid + a tRNA + H(+). Functionally, hydrolyzes ribosome-free peptidyl-tRNAs (with 1 or more amino acids incorporated), which drop off the ribosome during protein synthesis, or as a result of ribosome stalling. Its function is as follows. Catalyzes the release of premature peptidyl moieties from peptidyl-tRNA molecules trapped in stalled 50S ribosomal subunits, and thus maintains levels of free tRNAs and 50S ribosomes. The sequence is that of Peptidyl-tRNA hydrolase from Streptococcus sanguinis (strain SK36).